The sequence spans 577 residues: Jasmonoyl--L-amino acid synthetase JAR4 (577 aa).

Ser-99 contacts ATP. Ser-102 contacts jasmonate. ATP is bound by residues Met-119, Thr-122, Gly-163, Asn-168, and 331–336 (GSSEGW). 166 to 170 (TTNVY) contributes to the an L-alpha-amino acid binding site. 328-331 (ADYG) lines the jasmonate pocket. Residue 531 to 535 (KILDH) participates in an L-alpha-amino acid binding.

The protein belongs to the IAA-amido conjugating enzyme family.

The catalysed reaction is a jasmonate + an L-alpha-amino acid + ATP = a jasmonyl-L-amino acid + AMP + diphosphate + H(+). Its function is as follows. Catalyzes the synthesis of jasmonate-amino acid conjugates by adenylation. Catalyzes the conjugation of jasmonate (JA) to Ile, Leu and Val. Catalyzes the conjugation of jasmonate (JA) to Ile to mediate defense signaling and resistance to the herbivore Manduca sexta caterpillars. The chain is Jasmonoyl--L-amino acid synthetase JAR4 from Nicotiana attenuata (Coyote tobacco).